The chain runs to 1164 residues: FH1/FH2 domain-containing protein 1 (1164 aa).

In terms of domain architecture, GBD/FH3 spans 53 to 458 (AQIPAVHRLL…AAETEKQVAL (406 aa)). 2 disordered regions span residues 340–411 (DIEE…VGPP) and 470–500 (MPNE…QSPA). Basic and acidic residues predominate over residues 355 to 368 (KPSSEEGKRSRRSL). Ser367 carries the post-translational modification Phosphoserine. The span at 402–411 (GPASSPVGPP) shows a compositional bias: low complexity. Residue Ser486 is modified to Phosphoserine. The FH1 domain maps to 487–615 (PETAPAARTP…LAAPLPHSVP (129 aa)). Thr495 carries the post-translational modification Phosphothreonine. Ser498, Ser523, and Ser573 each carry phosphoserine. The interval 566-619 (GKDIPAPSPPLPLLSGVPPPPPLPPPPPIKGPFPPPPPLPLAAPLPHSVPDSSA) is disordered. Residues 571–608 (APSPPLPLLSGVPPPPPLPPPPPIKGPFPPPPPLPLAA) are compositionally biased toward pro residues. The tract at residues 612-807 (HSVPDSSALP…AEPLFDLKVG (196 aa)) is interaction with ROCK1. The region spanning 616-1013 (DSSALPTKRK…YRERNKTRGR (398 aa)) is the FH2 domain. Thr690 bears the Phosphothreonine mark. Residues 884 to 921 (LTRCAKVDFEQLTENLGQLERRSRAAEESLRSLAKHEL) adopt a coiled-coil conformation. The tract at residues 1020–1143 (KFSGVAGEAP…NRKSLRRTLK (124 aa)) is disordered. Over residues 1028-1041 (APSNPSVPVAVSSG) the composition is skewed to low complexity. In terms of domain architecture, DAD spans 1053–1133 (MKSLLTSRPE…AARERKRSRG (81 aa)). A compositionally biased stretch (polar residues) spans 1073 to 1089 (MVQSSSPIMPTVGPSTA). The span at 1127-1142 (ERKRSRGNRKSLRRTL) shows a compositional bias: basic residues.

Belongs to the formin homology family. As to quaternary structure, self-associates via the FH2 domain. Binds to F-actin via its N-terminus. Binds to the cytoplasmic domain of CD21 via its C-terminus. Interacts with ROCK1 in a Src-dependent manner. In terms of processing, phosphorylated by ROCK1. In terms of tissue distribution, ubiquitous. Highly expressed in spleen.

It is found in the cytoplasm. It localises to the cytoskeleton. The protein localises to the cell projection. The protein resides in the bleb. Functionally, required for the assembly of F-actin structures, such as stress fibers. Depends on the Rho-ROCK cascade for its activity. Contributes to the coordination of microtubules with actin fibers and plays a role in cell elongation. Acts synergistically with ROCK1 to promote SRC-dependent non-apoptotic plasma membrane blebbing. The chain is FH1/FH2 domain-containing protein 1 (FHOD1) from Homo sapiens (Human).